A 218-amino-acid polypeptide reads, in one-letter code: Large ribosomal subunit protein bL25 (218 aa).

The disordered stretch occupies residues 178–218; the sequence is VTPPTVTEDPDATEEDNTTAESVEATGERNDDNLDRPGRVE. Residues 185-195 are compositionally biased toward acidic residues; it reads EDPDATEEDNT. A compositionally biased stretch (basic and acidic residues) spans 203 to 218; it reads TGERNDDNLDRPGRVE.

This sequence belongs to the bacterial ribosomal protein bL25 family. CTC subfamily. In terms of assembly, part of the 50S ribosomal subunit; part of the 5S rRNA/L5/L18/L25 subcomplex. Contacts the 5S rRNA. Binds to the 5S rRNA independently of L5 and L18.

In terms of biological role, this is one of the proteins that binds to the 5S RNA in the ribosome where it forms part of the central protuberance. The sequence is that of Large ribosomal subunit protein bL25 from Shouchella clausii (strain KSM-K16) (Alkalihalobacillus clausii).